Reading from the N-terminus, the 504-residue chain is Doublesex- and mab-3-related transcription factor A1 (504 aa).

The segment covering 1–13 (MERSQCGSRDRGV) has biased composition (basic and acidic residues). The tract at residues 1 to 27 (MERSQCGSRDRGVSGRPHLAPGLVVAA) is disordered. The segment at residues 97-144 (CARCRNHGVVSALKGHKRFCRWRDCACAKCTLIAERQRVMAAQVALRR) is a DNA-binding region (DM). 2 disordered regions span residues 170 to 192 (GRAS…AAGA) and 266 to 307 (SISE…NESE). The segment covering 293 to 306 (RSLSSSDLESGNES) has biased composition (low complexity). A DMA domain is found at 327–362 (RDPLDILTKIFPNYRRSRLEGILRFCKGDVVQAIEQ).

This sequence belongs to the DMRT family. Expressed in liver, kidney, pancreas, prostate and weakly detected in testis and ovary.

The protein localises to the nucleus. The polypeptide is Doublesex- and mab-3-related transcription factor A1 (DMRTA1) (Homo sapiens (Human)).